A 140-amino-acid polypeptide reads, in one-letter code: MTIQYTFSMIKPDAIKRNKIGQINTYLENAGLKIVAQKMKYLTKYEAECFYDEHRARPFFNSLVEYITSGAVVLQVLKGTDAITLNRKIMGATNPDEAEAGTIRKDFGESIEANSIHGSDSQNSAKREIEFFFNKSEIIE.

Residues lysine 11, phenylalanine 59, arginine 87, threonine 93, arginine 104, and asparagine 114 each contribute to the ATP site. Catalysis depends on histidine 117, which acts as the Pros-phosphohistidine intermediate.

Belongs to the NDK family. Homotetramer. Mg(2+) is required as a cofactor.

Its subcellular location is the cytoplasm. The enzyme catalyses a 2'-deoxyribonucleoside 5'-diphosphate + ATP = a 2'-deoxyribonucleoside 5'-triphosphate + ADP. It carries out the reaction a ribonucleoside 5'-diphosphate + ATP = a ribonucleoside 5'-triphosphate + ADP. Its function is as follows. Major role in the synthesis of nucleoside triphosphates other than ATP. The ATP gamma phosphate is transferred to the NDP beta phosphate via a ping-pong mechanism, using a phosphorylated active-site intermediate. The sequence is that of Nucleoside diphosphate kinase from Rickettsia canadensis (strain McKiel).